The chain runs to 432 residues: Trigger factor (432 aa).

The PPIase FKBP-type domain occupies 165–250 (GDFAKIDFEG…LKEIQVKAPQ (86 aa)).

Belongs to the FKBP-type PPIase family. Tig subfamily.

The protein resides in the cytoplasm. The enzyme catalyses [protein]-peptidylproline (omega=180) = [protein]-peptidylproline (omega=0). In terms of biological role, involved in protein export. Acts as a chaperone by maintaining the newly synthesized protein in an open conformation. Functions as a peptidyl-prolyl cis-trans isomerase. This Wolinella succinogenes (strain ATCC 29543 / DSM 1740 / CCUG 13145 / JCM 31913 / LMG 7466 / NCTC 11488 / FDC 602W) (Vibrio succinogenes) protein is Trigger factor.